Here is a 560-residue protein sequence, read N- to C-terminus: Mannosyl-oligosaccharide 1,2-alpha-mannosidase MNS1 (560 aa).

Over 1-27 (MARSRSISGYGIWKYLNPAYYLRRPRR) the chain is Cytoplasmic. The helical; Signal-anchor for type II membrane protein transmembrane segment at 28–47 (LALLFIVFVSVSMLVWDRIN) threads the bilayer. Residues 47 to 80 (NLAREHEVEVFKLNEEVSRLEQMLEELNGGVGNK) adopt a coiled-coil conformation. At 48–560 (LAREHEVEVF…QRKFGHQINV (513 aa)) the chain is on the lumenal side. Glu-179 acts as the Proton donor in catalysis. Asp-312 is a catalytic residue. Asn-326 carries N-linked (GlcNAc...) asparagine glycosylation. Cys-377 and Cys-409 are disulfide-bonded. Glu-423 (proton donor) is an active-site residue. Glu-445 is an active-site residue. Asn-459 carries an N-linked (GlcNAc...) asparagine glycan. Thr-529 contributes to the Ca(2+) binding site.

The protein belongs to the glycosyl hydrolase 47 family. The cofactor is Ca(2+). It depends on Mn(2+) as a cofactor. Requires Mg(2+) as cofactor. Expressed in flowers, siliques, stems, leaves, roots, pollen grains, shoot apical meristems, hypocotyls and upper region of the root.

It is found in the golgi apparatus membrane. The catalysed reaction is N(4)-(alpha-D-Man-(1-&gt;2)-alpha-D-Man-(1-&gt;2)-alpha-D-Man-(1-&gt;3)-[alpha-D-Man-(1-&gt;2)-alpha-D-Man-(1-&gt;3)-[alpha-D-Man-(1-&gt;2)-alpha-D-Man-(1-&gt;6)]-alpha-D-Man-(1-&gt;6)]-beta-D-Man-(1-&gt;4)-beta-D-GlcNAc-(1-&gt;4)-beta-D-GlcNAc)-L-asparaginyl-[protein] (N-glucan mannose isomer 9A1,2,3B1,2,3) + 4 H2O = N(4)-(alpha-D-Man-(1-&gt;3)-[alpha-D-Man-(1-&gt;3)-[alpha-D-Man-(1-&gt;6)]-alpha-D-Man-(1-&gt;6)]-beta-D-Man-(1-&gt;4)-beta-D-GlcNAc-(1-&gt;4)-beta-D-GlcNAc)-L-asparaginyl-[protein] (N-glucan mannose isomer 5A1,2) + 4 beta-D-mannose. The enzyme catalyses N(4)-(alpha-D-Man-(1-&gt;2)-alpha-D-Man-(1-&gt;2)-alpha-D-Man-(1-&gt;3)-[alpha-D-Man-(1-&gt;3)-[alpha-D-Man-(1-&gt;2)-alpha-D-Man-(1-&gt;6)]-alpha-D-Man-(1-&gt;6)]-beta-D-Man-(1-&gt;4)-beta-D-GlcNAc-(1-&gt;4)-beta-D-GlcNAc)-L-asparaginyl-[protein] (N-glucan mannose isomer 8A1,2,3B1,3) + 3 H2O = N(4)-(alpha-D-Man-(1-&gt;3)-[alpha-D-Man-(1-&gt;3)-[alpha-D-Man-(1-&gt;6)]-alpha-D-Man-(1-&gt;6)]-beta-D-Man-(1-&gt;4)-beta-D-GlcNAc-(1-&gt;4)-beta-D-GlcNAc)-L-asparaginyl-[protein] (N-glucan mannose isomer 5A1,2) + 3 beta-D-mannose. It catalyses the reaction N(4)-(alpha-D-Man-(1-&gt;2)-alpha-D-Man-(1-&gt;2)-alpha-D-Man-(1-&gt;3)-[alpha-D-Man-(1-&gt;2)-alpha-D-Man-(1-&gt;3)-[alpha-D-Man-(1-&gt;2)-alpha-D-Man-(1-&gt;6)]-alpha-D-Man-(1-&gt;6)]-beta-D-Man-(1-&gt;4)-beta-D-GlcNAc-(1-&gt;4)-beta-D-GlcNAc)-L-asparaginyl-[protein] (N-glucan mannose isomer 9A1,2,3B1,2,3) + H2O = N(4)-(alpha-D-Man-(1-&gt;2)-alpha-D-Man-(1-&gt;2)-alpha-D-Man-(1-&gt;3)-[alpha-D-Man-(1-&gt;3)-[alpha-D-Man-(1-&gt;2)-alpha-D-Man-(1-&gt;6)]-alpha-D-Man-(1-&gt;6)]-beta-D-Man-(1-&gt;4)-beta-D-GlcNAc-(1-&gt;4)-beta-D-GlcNAc)-L-asparaginyl-[protein] (N-glucan mannose isomer 8A1,2,3B1,3) + beta-D-mannose. It participates in protein modification; protein glycosylation. Its activity is regulated as follows. Inhibited by kifunensine and 1-deoxymannojirimycin, but not by swainsonine. Functionally, class I alpha-mannosidase essential for early N-glycan processing. Progressively trims alpha-1,2-linked mannose residues. Produces Man(5)GlcNAc(2) from Man(8)GlcNAc(2), but only Man(6)GlcNAc(2) from Man(9)GlcNAc(2). Has difficulty acting on the terminal mannose of the b-branch. Involved in root development and cell wall biosynthesis. In Arabidopsis thaliana (Mouse-ear cress), this protein is Mannosyl-oligosaccharide 1,2-alpha-mannosidase MNS1 (MNS1).